A 277-amino-acid polypeptide reads, in one-letter code: NADPH-dependent 7-cyano-7-deazaguanine reductase (277 aa).

86–88 (IES) contacts substrate. 88 to 89 (SK) is a binding site for NADPH. Cys-184 serves as the catalytic Thioimide intermediate. The Proton donor role is filled by Asp-191. Residue 223 to 224 (HE) participates in substrate binding. 252 to 253 (RG) is a binding site for NADPH.

It belongs to the GTP cyclohydrolase I family. QueF type 2 subfamily. Homodimer.

It localises to the cytoplasm. The catalysed reaction is 7-aminomethyl-7-carbaguanine + 2 NADP(+) = 7-cyano-7-deazaguanine + 2 NADPH + 3 H(+). Its pathway is tRNA modification; tRNA-queuosine biosynthesis. Its function is as follows. Catalyzes the NADPH-dependent reduction of 7-cyano-7-deazaguanine (preQ0) to 7-aminomethyl-7-deazaguanine (preQ1). The polypeptide is NADPH-dependent 7-cyano-7-deazaguanine reductase (Chromohalobacter salexigens (strain ATCC BAA-138 / DSM 3043 / CIP 106854 / NCIMB 13768 / 1H11)).